We begin with the raw amino-acid sequence, 478 residues long: Receptor-interacting serine/threonine-protein kinase 3 (478 aa).

S2 is subject to Phosphoserine. Positions 22-290 (LENLGFVGKG…CESKTNNVYI (269 aa)) constitute a Protein kinase domain. Residues 28–36 (VGKGGFGAV) and K51 each bind ATP. D143 (proton acceptor) is an active-site residue. S165 carries the post-translational modification Phosphoserine. Position 185 is a phosphothreonine (T185). At S201 the chain carries Phosphoserine; by autocatalysis. T228 is subject to Phosphothreonine. A Phosphoserine; by autocatalysis modification is found at S229. T254 carries the post-translational modification Phosphothreonine. Phosphoserine occurs at positions 301 and 323. Residues 311–330 (RSSDTKLSARESSQKGTEVD) form a disordered region. Residues 313-330 (SDTKLSARESSQKGTEVD) show a composition bias toward basic and acidic residues. T335 bears the Phosphothreonine mark. Phosphoserine occurs at positions 350, 369, and 380. A disordered region spans residues 362 to 429 (ERRGKEASFG…RNSNPWYTWN (68 aa)). The segment covering 376–385 (AGTSSDTLAG) has biased composition (polar residues). At T392 the chain carries Phosphothreonine. Residues 413–429 (QRNQGDGRNSNPWYTWN) show a composition bias toward polar residues. The RIP homotypic interaction motif (RHIM) motif lies at 437-461 (LQSIVLNNCSEVQIGQHNCMSVQPR). R474 is modified (omega-N-methylarginine).

This sequence belongs to the protein kinase superfamily. TKL Ser/Thr protein kinase family. As to quaternary structure, interacts (via RIP homotypic interaction motif) with RIPK1 (via RIP homotypic interaction motif); this interaction induces RIPK1 phosphorylation and formation of a RIPK1-RIPK3 necrosis-inducing complex. Interacts with MLKL; the interaction is direct and triggers necroptosis. Interacts with ZBP1 (via RIP homotypic interaction motif); interaction with ZBP1 activates RIPK3, triggering necroptosis. Upon TNF-induced necrosis, the RIPK1-RIPK3 dimer further interacts with PGAM5 and MLKL; the formation of this complex leads to PGAM5 phosphorylation and increase in PGAM5 phosphatase activity. Binds TRAF2 and is recruited to the TNFR-1 signaling complex. Interacts with PYGL, GLUL and GLUD1; these interactions result in activation of these metabolic enzymes. Interacts with BIRC2/c-IAP1, BIRC3/c-IAP2 and XIAP/BIRC4. Interacts with ARHGEF2. Interacts with PELI1 (via atypical FHA domain); the phosphorylated form at Thr-185 binds preferentially to PELI1. Interacts with BUB1B, TRAF2 and STUB1. Interacts with CASP6. Component of the AIM2 PANoptosome complex, a multiprotein complex that drives inflammatory cell death (PANoptosis). Post-translationally, RIPK1 and RIPK3 undergo reciprocal auto- and trans-phosphorylation. Autophosphorylated following interaction with ZBP1. Phosphorylation of Ser-201 plays a role in the necroptotic function of RIPK3. Autophosphorylates at Thr-228 and Ser-229 following activation by ZBP1: phosphorylation at these sites is a hallmark of necroptosis and is required for binding MLKL. Phosphorylation at Thr-185 is important for its kinase activity, interaction with PELI1 and for its ability to mediate TNF-induced necroptosis. In terms of processing, polyubiquitinated with 'Lys-48' and 'Lys-63'-linked chains by BIRC2/c-IAP1 and BIRC3/c-IAP2, leading to activation of NF-kappa-B. Ubiquitinated by STUB1 leading to its subsequent proteasome-dependent degradation.

The protein localises to the cytoplasm. The protein resides in the cytosol. It localises to the nucleus. It catalyses the reaction L-seryl-[protein] + ATP = O-phospho-L-seryl-[protein] + ADP + H(+). It carries out the reaction L-threonyl-[protein] + ATP = O-phospho-L-threonyl-[protein] + ADP + H(+). With respect to regulation, activity is stimulated by ZBP1, which senses double-stranded Z-RNA structures. RIPK3-dependent necroptosis is inhibited by RIPK1: RIPK1 prevents the ZBP1-induced activation of RIPK3 via FADD-mediated recruitment of CASP8, which cleaves RIPK1 and limits TNF-induced necroptosis. Its function is as follows. Serine/threonine-protein kinase that activates necroptosis and apoptosis, two parallel forms of cell death. Necroptosis, a programmed cell death process in response to death-inducing TNF-alpha family members, is triggered by RIPK3 following activation by ZBP1. Activated RIPK3 forms a necrosis-inducing complex and mediates phosphorylation of MLKL, promoting MLKL localization to the plasma membrane and execution of programmed necrosis characterized by calcium influx and plasma membrane damage. In addition to TNF-induced necroptosis, necroptosis can also take place in the nucleus in response to orthomyxoviruses infection: following ZBP1 activation, which senses double-stranded Z-RNA structures, nuclear RIPK3 catalyzes phosphorylation and activation of MLKL, promoting disruption of the nuclear envelope and leakage of cellular DNA into the cytosol. Also regulates apoptosis: apoptosis depends on RIPK1, FADD and CASP8, and is independent of MLKL and RIPK3 kinase activity. Phosphorylates RIPK1: RIPK1 and RIPK3 undergo reciprocal auto- and trans-phosphorylation. In some cell types, also able to restrict viral replication by promoting cell death-independent responses. In response to flavivirus infection in neurons, promotes a cell death-independent pathway that restricts viral replication: together with ZBP1, promotes a death-independent transcriptional program that modifies the cellular metabolism via up-regulation expression of the enzyme ACOD1/IRG1 and production of the metabolite itaconate. Itaconate inhibits the activity of succinate dehydrogenase, generating a metabolic state in neurons that suppresses replication of viral genomes. RIPK3 binds to and enhances the activity of three metabolic enzymes: GLUL, GLUD1, and PYGL. These metabolic enzymes may eventually stimulate the tricarboxylic acid cycle and oxidative phosphorylation, which could result in enhanced ROS production. The sequence is that of Receptor-interacting serine/threonine-protein kinase 3 from Rattus norvegicus (Rat).